The following is a 289-amino-acid chain: Phosphatidylglycerol--prolipoprotein diacylglyceryl transferase (289 aa).

3 helical membrane-spanning segments follow: residues Gly-24–Leu-44, Gly-70–Leu-90, and Gly-111–Phe-131. Arg-158 serves as a coordination point for a 1,2-diacyl-sn-glycero-3-phospho-(1'-sn-glycerol). The next 2 membrane-spanning stretches (helical) occupy residues Gly-219–Phe-239 and Phe-253–Trp-273.

This sequence belongs to the Lgt family.

The protein resides in the cell inner membrane. The catalysed reaction is L-cysteinyl-[prolipoprotein] + a 1,2-diacyl-sn-glycero-3-phospho-(1'-sn-glycerol) = an S-1,2-diacyl-sn-glyceryl-L-cysteinyl-[prolipoprotein] + sn-glycerol 1-phosphate + H(+). Its pathway is protein modification; lipoprotein biosynthesis (diacylglyceryl transfer). In terms of biological role, catalyzes the transfer of the diacylglyceryl group from phosphatidylglycerol to the sulfhydryl group of the N-terminal cysteine of a prolipoprotein, the first step in the formation of mature lipoproteins. This Chlorobaculum tepidum (strain ATCC 49652 / DSM 12025 / NBRC 103806 / TLS) (Chlorobium tepidum) protein is Phosphatidylglycerol--prolipoprotein diacylglyceryl transferase.